Here is a 636-residue protein sequence, read N- to C-terminus: Ketocytochalasin monooxygenase (636 aa).

FAD-binding positions include Asp125, 133–136 (TWYW), Asp145, Tyr151, and Ile195. An NADP(+)-binding site is contributed by 143 to 145 (ACD). Residues 279–285 (TGASAVQ), 302–303 (RT), and 420–421 (KR) contribute to the NADP(+) site. Trp534 contacts FAD.

It belongs to the FAD-binding monooxygenase family. FAD is required as a cofactor.

It carries out the reaction ketocytochalasin + NADPH + O2 + H(+) = iso-precytochalasin + NADP(+) + H2O. The enzyme catalyses iso-precytochalasin + NADPH + O2 + H(+) = cytochalasin Z16 + NADP(+) + H2O. It functions in the pathway mycotoxin biosynthesis. Its function is as follows. Ketocytochalasin monooxygenase; part of the gene cluster that mediates the biosynthesis of a family of the mycotoxins cytochalasins E and K. The hybrid PKS-NRPS synthetase ccsA and the enoyl reductase ccsC are responsible for fusion of phenylalanine with an octaketide backbone and subsequent release of the stable tetramic acid precursor. The polyketide synthase module (PKS) of the PKS-NRPS ccsA is responsible for the synthesis of the octaketide backbone. The downstream nonribosomal peptide synthetase (NRPS) amidates the carboxyl end of the octaketide with a phenylalanine. A reductase-like domain (R) at the C-terminus catalyzes the reductive release of the polyketide-amino acid intermediate. Because ccsA lacks a designated enoylreductase (ER) domain, the required activity is provided the enoyl reductase ccsC. Upon formation of the 11-membered carbocycle-fused perhydroisoindolone intermediate, a number of oxidative steps are required to afford the final cytochalasin E and K, including two hydroxylations at C17 and C18, one alcohol oxidation at C17, one epoxidation at C6 and C7 and two Baeyer-Villiger oxidations. The oxidative modification at C17, C18 and the C6-C7 epoxidation are likely to be catalyzed by the two cytochrome P450 oxygenases ccsD and ccsG. CcsD may be responsible for the epoxidation of the C6-C7 double bond. CcsG may be responsible for the successive oxidative modifications at C17 and C18. The double Baeyer-Villiger oxidations of ketocytochalasin to precytochalasin and cytochalasin Z(16) are among the final steps leading to cytochalasin E and K and are catalyzed by ccsB. The first oxygen insertion step follows that of the classic BVMO mechanism, generating the ester precytochalasin. Release of precytochalasin into an aqueous environment can generate the shunt product iso-precytochalasin through spontaneous isomerization. Alternatively, precytochalasin can undergo further oxidation by ccsB to yield the in-line carbonate-containing cytochalasin Z(16). Cytochalasin Z(16) is a precursor to cytochalasin E and cytochalasin K, whereas iso-precytochalasin is a precursor to cytochalasin Z(17) and rosellichalasin. The hydrolyase ccsE may catalyze hydrolysis of epoxide bond in cytochalasin E to afford cytochalasin K. The function of ccsF has not been assigned but it may play a role in post-PKS-NRPS biosynthetic step, resistance or transport of cytochalasins and related PKS-NRPS products. This Aspergillus clavatus (strain ATCC 1007 / CBS 513.65 / DSM 816 / NCTC 3887 / NRRL 1 / QM 1276 / 107) protein is Ketocytochalasin monooxygenase.